The chain runs to 790 residues: MKSNPGITVIKQNASNVMEKTLKEEGQSRSNSEDSDDDKPLSHKLSSGALNGNSHHIRMGSNLSCPSPYTSPKPRIIKGPEDEMLLSSELQLNAGASNAESSDSDESKPLASELEDPSSSLNKRPLIQPKNSDPSPSKKAKLSEPSAPTNRKLKTAEQEEAAADDDPSISNRNKKSTTPASKVSDKKKRPDVSASVNKVDFSKSLKVPLVLVKGRNGQPLVHNGVIFPPLYKPHGVKMLYRENPVDLTPEQEEVATMFAVMLETEYMTKPKFRENFMSDWRKILGEKHIIQNLEDCDFTPIYEWHQREKEKKKQMSTDEKKAIKEGKDETRKEKYMWAVVDGMSREKVGNFRVGTTRVVQRSWRASKDPQVKKNVYSQIDITINIGKDAPIPEPPIPGERWKEIRHDNTVTWLAFWNDPINPKEFKYVFLAASSSLKGKVTREKYEKSRKLKDYIEGIRAAAYTKDFASKDSKKRQIAVATYLIDKLALRAGNEKDDDEADTVGCCTLKVENVETKRPNILKFDFLGKDSIRYQNEVEVEPRVFSAIEQFRSGKEGGDDLFDQLDTSKLNAHLKELMPGLTAKVFRTYNASITLDEMVRCKLLSRETKGGDVAEKVVVYQHANKEVAIICNHQRTVSKSHSAQMVRLNEKIEELKGLLKELQEDLTRVNKGKPPLKNSDGKPKRNLNLKRYKGKLLKLIQKLRKWSETRRLSVTKKIAQTNTKIEKMERDKETKEDLKTVALGTSKINYLDPRITVAWCKRHDVPIEKIFNKSLLAKFAWAMDVVLIFRF.

Polar residues-rich tracts occupy residues methionine 1–methionine 18, lysine 44–serine 54, and serine 61–threonine 70. Positions methionine 1–valine 196 are disordered. The span at glutamine 158–proline 167 shows a compositional bias: acidic residues. Residues serine 168–serine 181 are compositionally biased toward polar residues. 3 interaction with DNA regions span residues lysine 426 to tyrosine 427, arginine 490 to lysine 495, and threonine 581 to lysine 583. The 358-residue stretch at serine 433–phenylalanine 790 folds into the Topo IB-type catalytic domain. Tyrosine 749 acts as the O-(3'-phospho-DNA)-tyrosine intermediate in catalysis.

Belongs to the type IB topoisomerase family.

It localises to the nucleus. It carries out the reaction ATP-independent breakage of single-stranded DNA, followed by passage and rejoining.. In terms of biological role, releases the supercoiling and torsional tension of DNA introduced during the DNA replication and transcription by transiently cleaving and rejoining one strand of the DNA duplex. Introduces a single-strand break via transesterification at a target site in duplex DNA. The scissile phosphodiester is attacked by the catalytic tyrosine of the enzyme, resulting in the formation of a DNA-(3'-phosphotyrosyl)-enzyme intermediate and the expulsion of a 5'-OH DNA strand. The free DNA strand then rotates around the intact phosphodiester bond on the opposing strand, thus removing DNA supercoils. Finally, in the religation step, the DNA 5'-OH attacks the covalent intermediate to expel the active-site tyrosine and restore the DNA phosphodiester backbone. This is DNA topoisomerase 1 (TOP1) from Daucus carota (Wild carrot).